Reading from the N-terminus, the 501-residue chain is Aspartate--tRNA ligase, cytoplasmic (501 aa).

T52 is modified (phosphothreonine). The residue at position 74 (K74) is an N6-acetyllysine. E229 provides a ligand contact to L-aspartate. S249 is modified (phosphoserine). The aspartate stretch occupies residues 251-254 (QLYK). R273 contacts L-aspartate. Residues 273–275 (RAE) and 281–283 (RHL) each bind ATP. K374 carries the post-translational modification N6-acetyllysine. E424 is a binding site for ATP. The L-aspartate site is built by S427 and R431. 472–475 (GLER) serves as a coordination point for ATP.

The protein belongs to the class-II aminoacyl-tRNA synthetase family. Type 2 subfamily. In terms of assembly, homodimer. Part of a multisubunit complex that groups tRNA ligases for Arg (RARS1), Asp (DARS1), Gln (QARS1), Ile (IARS1), Leu (LARS1), Lys (KARS1), Met (MARS1) the bifunctional ligase for Glu and Pro (EPRS1) and the auxiliary subunits AIMP1/p43, AIMP2/p38 and EEF1E1/p18.

It is found in the cytoplasm. The enzyme catalyses tRNA(Asp) + L-aspartate + ATP = L-aspartyl-tRNA(Asp) + AMP + diphosphate. In terms of biological role, catalyzes the specific attachment of an amino acid to its cognate tRNA in a 2 step reaction: the amino acid (AA) is first activated by ATP to form AA-AMP and then transferred to the acceptor end of the tRNA. The chain is Aspartate--tRNA ligase, cytoplasmic (Dars1) from Mus musculus (Mouse).